A 468-amino-acid polypeptide reads, in one-letter code: MKKFLDKDFLLSTEAAKELFHKYAEKKPILDYHCHINPEEIAKDRQFENISQLWLGSDHYKWRQMRSCGVEEKYITGNASDSEKFQKWAETLEKAIGNPLYHWSHLELRRYFGYEGVLNGETAKEVWTICNEKLREKSMSARSMIKQSSVTLICTTDDPVDNLEWHKKIKEEESFDVQVLPTWRPDRALNIEKPGFKDYIARFSEVSGVNITSFKTMKEAFRKRLGFFISSGCRTTDHAPEYIMYVPSSDKEVETIFDKRLSGVALSKEEELKYKTAFMLFAGGEYSKNDLVMELHYGCKRNNNTLVFDKLGPDTGHDCIDNFAPGAQLSNFLDALDSAGQLPRTIIYSLNPNDNAVIGTILGCFQDSSALSKIQQGAAWWFNDHKPGITEQLTSLANLGILSNFVGMLTDSRSFLSYTRHEYFRRILCDLIGSWVENGEYPYDVKILSKIVSDISYDNAVRYFKFKL.

Belongs to the metallo-dependent hydrolases superfamily. Uronate isomerase family.

It catalyses the reaction D-glucuronate = D-fructuronate. The enzyme catalyses aldehydo-D-galacturonate = keto-D-tagaturonate. It participates in carbohydrate metabolism; pentose and glucuronate interconversion. The protein is Uronate isomerase of Endomicrobium trichonymphae.